A 370-amino-acid chain; its full sequence is Phosphate acyltransferase (370 aa).

Positions 349–370 (SAGRAGQDAPDEMAAPGRSEKR) are disordered.

Belongs to the PlsX family. In terms of assembly, homodimer. Probably interacts with PlsY.

It is found in the cytoplasm. The catalysed reaction is a fatty acyl-[ACP] + phosphate = an acyl phosphate + holo-[ACP]. Its pathway is lipid metabolism; phospholipid metabolism. Its function is as follows. Catalyzes the reversible formation of acyl-phosphate (acyl-PO(4)) from acyl-[acyl-carrier-protein] (acyl-ACP). This enzyme utilizes acyl-ACP as fatty acyl donor, but not acyl-CoA. The polypeptide is Phosphate acyltransferase (Cereibacter sphaeroides (strain ATCC 17029 / ATH 2.4.9) (Rhodobacter sphaeroides)).